The chain runs to 231 residues: Fibrillarin-like rRNA/tRNA 2'-O-methyltransferase (231 aa).

Residues 88 to 89 (TT), 106 to 107 (EF), 131 to 132 (DA), and 151 to 154 (DVAQ) contribute to the S-adenosyl-L-methionine site.

Belongs to the methyltransferase superfamily. Fibrillarin family. In terms of assembly, interacts with nop5. Component of box C/D small ribonucleoprotein (sRNP) particles that contain rpl7ae, FlpA and nop5, plus a guide RNA.

In terms of biological role, involved in pre-rRNA and tRNA processing. Utilizes the methyl donor S-adenosyl-L-methionine to catalyze the site-specific 2'-hydroxyl methylation of ribose moieties in rRNA and tRNA. Site specificity is provided by a guide RNA that base pairs with the substrate. Methylation occurs at a characteristic distance from the sequence involved in base pairing with the guide RNA. This chain is Fibrillarin-like rRNA/tRNA 2'-O-methyltransferase, found in Methanococcus aeolicus (strain ATCC BAA-1280 / DSM 17508 / OCM 812 / Nankai-3).